The sequence spans 269 residues: MPLYFIGLGLYDEKDITLKGLEIAKRCDKVYAEFYTSLMAGTTLEKIEEVIGKKIIVLNREDVEMNFEKIVLPEAKEKEVAFLTAGDPMVATTHAELRIRAKRMGVESYVIHAPSIYSAVAITGLHIYKFGKSATVAYPEGNWFPTSYYDVVKENLERGLHTLLFLDIKAEKGKYMTANEAMELLLKVEEMRGENVFTPNTLVVVLGRAGSLNPTIRAGYVKDMIKEDFGKQPHVLIVPGKLHVVEAEYLVEIAGAPKEILEQFAPRKM.

Residues Leu-10, Asp-87, Val-90, 115 to 116, Leu-166, Ala-209, and His-234 each bind S-adenosyl-L-methionine; that span reads SI.

It belongs to the diphthine synthase family. In terms of assembly, homodimer.

It catalyses the reaction 2-[(3S)-amino-3-carboxypropyl]-L-histidyl-[translation elongation factor 2] + 3 S-adenosyl-L-methionine = diphthine-[translation elongation factor 2] + 3 S-adenosyl-L-homocysteine + 3 H(+). Its pathway is protein modification; peptidyl-diphthamide biosynthesis. Its function is as follows. S-adenosyl-L-methionine-dependent methyltransferase that catalyzes the trimethylation of the amino group of the modified target histidine residue in translation elongation factor 2 (EF-2), to form an intermediate called diphthine. The three successive methylation reactions represent the second step of diphthamide biosynthesis. This is Diphthine synthase from Pyrococcus furiosus (strain ATCC 43587 / DSM 3638 / JCM 8422 / Vc1).